Here is a 124-residue protein sequence, read N- to C-terminus: Putative iron-sulfur cluster insertion protein ErpA (124 aa).

Iron-sulfur cluster contacts are provided by Cys-52, Cys-116, and Cys-118.

This sequence belongs to the HesB/IscA family. In terms of assembly, homodimer. Iron-sulfur cluster serves as cofactor.

Its function is as follows. Required for insertion of 4Fe-4S clusters. This Ralstonia pickettii (strain 12J) protein is Putative iron-sulfur cluster insertion protein ErpA.